Here is a 335-residue protein sequence, read N- to C-terminus: Aliphatic sulfonates import ATP-binding protein SsuB (335 aa).

The tract at residues 48 to 71 (PFASGGAFGRAPRDDDDDRRGAGD) is disordered. An ABC transporter domain is found at 74 to 293 (VRLTRVSKRY…ARASAAFAEL (220 aa)). 106-113 (GRSGCGKS) provides a ligand contact to ATP.

It belongs to the ABC transporter superfamily. Aliphatic sulfonates importer (TC 3.A.1.17.2) family. As to quaternary structure, the complex is composed of two ATP-binding proteins (SsuB), two transmembrane proteins (SsuC) and a solute-binding protein (SsuA).

The protein resides in the cell inner membrane. The catalysed reaction is ATP + H2O + aliphatic sulfonate-[sulfonate-binding protein]Side 1 = ADP + phosphate + aliphatic sulfonateSide 2 + [sulfonate-binding protein]Side 1.. In terms of biological role, part of the ABC transporter complex SsuABC involved in aliphatic sulfonates import. Responsible for energy coupling to the transport system. This is Aliphatic sulfonates import ATP-binding protein SsuB from Burkholderia thailandensis (strain ATCC 700388 / DSM 13276 / CCUG 48851 / CIP 106301 / E264).